The following is a 327-amino-acid chain: GMP reductase (327 aa).

The active-site Thioimidate intermediate is the Cys176. 205–228 contacts NADP(+); sequence IIADGGIRTHGDIAKSIRFGASMV.

It belongs to the IMPDH/GMPR family. GuaC type 2 subfamily.

The catalysed reaction is IMP + NH4(+) + NADP(+) = GMP + NADPH + 2 H(+). Functionally, catalyzes the irreversible NADPH-dependent deamination of GMP to IMP. It functions in the conversion of nucleobase, nucleoside and nucleotide derivatives of G to A nucleotides, and in maintaining the intracellular balance of A and G nucleotides. The polypeptide is GMP reductase (Streptococcus agalactiae serotype V (strain ATCC BAA-611 / 2603 V/R)).